The following is a 122-amino-acid chain: Ribosomal silencing factor RsfS (122 aa).

It belongs to the Iojap/RsfS family. As to quaternary structure, interacts with ribosomal protein uL14 (rplN).

The protein resides in the cytoplasm. In terms of biological role, functions as a ribosomal silencing factor. Interacts with ribosomal protein uL14 (rplN), blocking formation of intersubunit bridge B8. Prevents association of the 30S and 50S ribosomal subunits and the formation of functional ribosomes, thus repressing translation. The sequence is that of Ribosomal silencing factor RsfS from Chromobacterium violaceum (strain ATCC 12472 / DSM 30191 / JCM 1249 / CCUG 213 / NBRC 12614 / NCIMB 9131 / NCTC 9757 / MK).